Reading from the N-terminus, the 88-residue chain is Large ribosomal subunit protein bL27 (88 aa).

A disordered region spans residues 1 to 24 (MAHKKGTGSTRNGRDSNSKRLGVK).

It belongs to the bacterial ribosomal protein bL27 family.

This is Large ribosomal subunit protein bL27 from Synechococcus sp. (strain CC9311).